We begin with the raw amino-acid sequence, 966 residues long: Leucine--tRNA ligase (966 aa).

Positions 41-51 match the 'HIGH' region motif; sequence PYLNGNLHAGH. The 'KMSKS' region motif lies at 632–636; that stretch reads KMSKS. K635 is a binding site for ATP.

This sequence belongs to the class-I aminoacyl-tRNA synthetase family.

The protein localises to the cytoplasm. It carries out the reaction tRNA(Leu) + L-leucine + ATP = L-leucyl-tRNA(Leu) + AMP + diphosphate. The chain is Leucine--tRNA ligase from Methanosarcina barkeri (strain Fusaro / DSM 804).